The primary structure comprises 292 residues: uncharacterized protein (292 aa).

The protein belongs to the glycosyltransferase 2 family. WaaE/KdtX subfamily.

This is an uncharacterized protein from Rickettsia typhi (strain ATCC VR-144 / Wilmington).